Consider the following 818-residue polypeptide: Glycerol-3-phosphate acyltransferase (818 aa).

Positions 305–310 (CHRSHM) match the HXXXXD motif motif.

Belongs to the GPAT/DAPAT family.

It is found in the cell inner membrane. It catalyses the reaction sn-glycerol 3-phosphate + an acyl-CoA = a 1-acyl-sn-glycero-3-phosphate + CoA. It participates in phospholipid metabolism; CDP-diacylglycerol biosynthesis; CDP-diacylglycerol from sn-glycerol 3-phosphate: step 1/3. This is Glycerol-3-phosphate acyltransferase from Edwardsiella ictaluri (strain 93-146).